The following is a 229-amino-acid chain: Germin-like protein 3-6 (229 aa).

The signal sequence occupies residues 1–31 (MEHSFKTIAAGVVIVVLLLQQAPVLIRATDA). A disulfide bridge connects residues Cys38 and Cys53. In terms of domain architecture, Cupin type-1 spans 67-219 (SKIATGGDVN…ALRVDAGVVE (153 aa)). Residues Asn80 and Asn83 are each glycosylated (N-linked (GlcNAc...) asparagine). Residues His116, His118, Glu123, and His165 each coordinate Mn(2+).

The protein belongs to the germin family. Oligomer (believed to be a pentamer but probably hexamer).

It localises to the secreted. It is found in the extracellular space. The protein localises to the apoplast. In terms of biological role, may play a role in plant defense. Probably has no oxalate oxidase activity even if the active site is conserved. In Oryza sativa subsp. japonica (Rice), this protein is Germin-like protein 3-6.